A 329-amino-acid chain; its full sequence is MDVVLQYADKYVFDTFYGKIAESFDSSSSFANTAVNSTTLGLAEKVNFAITSGLLDRNNVWRQFTSLFLITWIMGTLSYFLSASFAYYVYFDREEARRHPKFLKNQEHLELMVALKNLPGMAILTAPWFLAEIRGYGYVYDKLDEYGYFYLFFSIALFLLFSDFLIYWIHRALHHRWLYAPLHKLHHKWIVPTPYSSHAFHYLDGYSQSLPYHMFPFFFPLNKYVYLLLFGSVNYWTVLIHDGKYFSNNAVVNGAAHHAAHHMYFNYNYGQFFTLFDRLCSSYRQPDQELFDAELRNEKLQEQRIRFMETVQYTVEGKDDRTYASKKDN.

2 helical membrane passes run 67 to 87 (LFLI…SFAY) and 149 to 169 (FYLF…IYWI). Residues 156–281 (ALFLLFSDFL…FFTLFDRLCS (126 aa)) enclose the Fatty acid hydroxylase domain. Residues 170–175 (HRALHH) carry the Histidine box-1 motif. The Histidine box-2 signature appears at 183–187 (HKLHH). Residues 210–230 (LPYHMFPFFFPLNKYVYLLLF) form a helical membrane-spanning segment. A Histidine box-3 motif is present at residues 257-262 (HHAAHH).

It belongs to the sterol desaturase family. Fe cation serves as cofactor.

It is found in the endoplasmic reticulum membrane. The protein resides in the golgi apparatus membrane. It carries out the reaction episterol + 2 Fe(II)-[cytochrome b5] + O2 + 2 H(+) = 5-dehydroepisterol + 2 Fe(III)-[cytochrome b5] + 2 H2O. The protein operates within steroid metabolism; ergosterol biosynthesis. C-5 sterol desaturase; part of the third module of ergosterol biosynthesis pathway that includes by the late steps of the pathway. Erg31 and erg32 catalyze the introduction of a C-5 double bond in the B ring to produce 5-dehydroepisterol. The third module or late pathway involves the ergosterol synthesis itself through consecutive reactions that mainly occur in the endoplasmic reticulum (ER) membrane. Firstly, the squalene synthase erg9 catalyzes the condensation of 2 farnesyl pyrophosphate moieties to form squalene, which is the precursor of all steroids. Secondly, squalene is converted into lanosterol by the consecutive action of the squalene epoxidase erg1 and the lanosterol synthase erg7. The lanosterol 14-alpha-demethylase erg11/cyp1 catalyzes C14-demethylation of lanosterol to produce 4,4'-dimethyl cholesta-8,14,24-triene-3-beta-ol. In the next steps, a complex process involving various demethylation, reduction and desaturation reactions catalyzed by the C-14 reductase erg24 and the C-4 demethylation complex erg25-erg26-erg27 leads to the production of zymosterol. Erg28 likely functions in the C-4 demethylation complex reaction by tethering erg26 and Erg27 to the endoplasmic reticulum or to facilitate interaction between these proteins. Then, the sterol 24-C-methyltransferase erg6 catalyzes the methyl transfer from S-adenosyl-methionine to the C-24 of zymosterol to form fecosterol. The C-8 sterol isomerase erg2 catalyzes the reaction which results in unsaturation at C-7 in the B ring of sterols and thus converts fecosterol to episterol. The sterol-C5-desaturases erg31 and erg32 then catalyze the introduction of a C-5 double bond in the B ring to produce 5-dehydroepisterol. The C-22 sterol desaturase erg5 further converts 5-dehydroepisterol into ergosta-5,7,22,24(28)-tetraen-3beta-ol by forming the C-22(23) double bond in the sterol side chain. Finally, ergosta-5,7,22,24(28)-tetraen-3beta-ol is substrate of the C-24(28) sterol reductase erg4 to produce ergosterol. In the genus Schizosaccharomyces, a second route exists between lanosterol and fecosterol, via the methylation of lanosterol to eburicol by erg6, followed by C14-demethylation by erg11/cyp1 and C4-demethylation by the demethylation complex erg25-erg26-erg27. In Schizosaccharomyces pombe (strain 972 / ATCC 24843) (Fission yeast), this protein is Delta(7)-sterol 5(6)-desaturase erg32.